The sequence spans 145 residues: Putative pre-16S rRNA nuclease (145 aa).

Belongs to the YqgF nuclease family.

It localises to the cytoplasm. In terms of biological role, could be a nuclease involved in processing of the 5'-end of pre-16S rRNA. The protein is Putative pre-16S rRNA nuclease of Pseudomonas fluorescens (strain SBW25).